Here is a 398-residue protein sequence, read N- to C-terminus: 1-deoxy-D-xylulose 5-phosphate reductoisomerase (398 aa).

Positions 10, 11, 12, 13, 37, 38, and 124 each coordinate NADPH. Residue lysine 125 participates in 1-deoxy-D-xylulose 5-phosphate binding. Residue glutamate 126 coordinates NADPH. Aspartate 150 serves as a coordination point for Mn(2+). Serine 151, glutamate 152, serine 186, and histidine 209 together coordinate 1-deoxy-D-xylulose 5-phosphate. Glutamate 152 serves as a coordination point for Mn(2+). Residue glycine 215 coordinates NADPH. 1-deoxy-D-xylulose 5-phosphate contacts are provided by serine 222, asparagine 227, lysine 228, and glutamate 231. Glutamate 231 provides a ligand contact to Mn(2+).

The protein belongs to the DXR family. In terms of assembly, homodimer. Requires Mg(2+) as cofactor. Mn(2+) is required as a cofactor.

The catalysed reaction is 2-C-methyl-D-erythritol 4-phosphate + NADP(+) = 1-deoxy-D-xylulose 5-phosphate + NADPH + H(+). Its pathway is isoprenoid biosynthesis; isopentenyl diphosphate biosynthesis via DXP pathway; isopentenyl diphosphate from 1-deoxy-D-xylulose 5-phosphate: step 1/6. Its function is as follows. Catalyzes the NADPH-dependent rearrangement and reduction of 1-deoxy-D-xylulose-5-phosphate (DXP) to 2-C-methyl-D-erythritol 4-phosphate (MEP). The protein is 1-deoxy-D-xylulose 5-phosphate reductoisomerase of Buchnera aphidicola subsp. Schizaphis graminum (strain Sg).